The following is a 557-amino-acid chain: Eukaryotic translation initiation factor 3 subunit D-2 (557 aa).

Residues 292–306 (QFDMLTVNETALEPP) are RNA gate. The disordered stretch occupies residues 533–557 (FDSDNNDGEETSDDRPFLNSKDNKL). Residues 545–557 (DDRPFLNSKDNKL) are compositionally biased toward basic and acidic residues.

This sequence belongs to the eIF-3 subunit D family. As to quaternary structure, component of the eukaryotic translation initiation factor 3 (eIF-3) complex. The eIF-3 complex interacts with pix.

It is found in the cytoplasm. Functionally, mRNA cap-binding component of the eukaryotic translation initiation factor 3 (eIF-3) complex, which is involved in protein synthesis of a specialized repertoire of mRNAs and, together with other initiation factors, stimulates binding of mRNA and methionyl-tRNAi to the 40S ribosome. The eIF-3 complex specifically targets and initiates translation of a subset of mRNAs involved in cell proliferation. In the eIF-3 complex, eif3d specifically recognizes and binds the 7-methylguanosine cap of a subset of mRNAs. In Drosophila grimshawi (Hawaiian fruit fly), this protein is Eukaryotic translation initiation factor 3 subunit D-2.